Here is a 270-residue protein sequence, read N- to C-terminus: Sec-independent protein translocase protein TatC (270 aa).

Transmembrane regions (helical) follow at residues 25–45, 75–95, 111–131, 156–176, 195–211, and 213–233; these read FIAV…LFDI, VSLL…FWMF, VVIL…FIVF, LGFA…PLVL, KYAI…ITPP, and VVTQ…SIIG. The tract at residues 243-270 is disordered; that stretch reads SDEEEAAENSDVQTDKSTDDTTPGEDQN.

This sequence belongs to the TatC family. The Tat system comprises two distinct complexes: a TatABC complex, containing multiple copies of TatA, TatB and TatC subunits, and a separate TatA complex, containing only TatA subunits. Substrates initially bind to the TatABC complex, which probably triggers association of the separate TatA complex to form the active translocon.

The protein localises to the cell inner membrane. In terms of biological role, part of the twin-arginine translocation (Tat) system that transports large folded proteins containing a characteristic twin-arginine motif in their signal peptide across membranes. Together with TatB, TatC is part of a receptor directly interacting with Tat signal peptides. This Desulforapulum autotrophicum (strain ATCC 43914 / DSM 3382 / VKM B-1955 / HRM2) (Desulfobacterium autotrophicum) protein is Sec-independent protein translocase protein TatC.